A 607-amino-acid polypeptide reads, in one-letter code: Chaperone protein DnaK (607 aa).

Residue threonine 173 is modified to Phosphothreonine; by autocatalysis. Basic and acidic residues-rich tracts occupy residues 490 to 509 (EQNA…RNEA) and 524 to 542 (GDNV…KEAL). 3 disordered regions span residues 490–510 (EQNA…NEAD), 524–555 (GDNV…EDIK), and 574–607 (QQAQ…KDNK). Positions 574–587 (QQAQQGDAAGSNQS) are enriched in polar residues. A compositionally biased stretch (basic and acidic residues) spans 595–607 (TEVKDDDDKKDNK).

This sequence belongs to the heat shock protein 70 family.

Acts as a chaperone. The polypeptide is Chaperone protein DnaK (Staphylococcus carnosus (strain TM300)).